Reading from the N-terminus, the 158-residue chain is Large ribosomal subunit protein bL19 (158 aa).

Residues 119–129 (SDRSRVMKDAA) show a composition bias toward basic and acidic residues. Residues 119–158 (SDRSRVMKDAARAQQARDAAQGNSSSETQSSTAAVETQGE) are disordered. Over residues 130 to 139 (RAQQARDAAQ) the composition is skewed to low complexity. The span at 140-158 (GNSSSETQSSTAAVETQGE) shows a compositional bias: polar residues.

Belongs to the bacterial ribosomal protein bL19 family.

Functionally, this protein is located at the 30S-50S ribosomal subunit interface and may play a role in the structure and function of the aminoacyl-tRNA binding site. The sequence is that of Large ribosomal subunit protein bL19 from Deinococcus geothermalis (strain DSM 11300 / CIP 105573 / AG-3a).